Reading from the N-terminus, the 258-residue chain is Hydroxyacylglutathione hydrolase (258 aa).

The Zn(2+) site is built by His-52, His-54, Asp-56, His-57, His-109, Asp-126, and His-164.

The protein belongs to the metallo-beta-lactamase superfamily. Glyoxalase II family. Monomer. The cofactor is Zn(2+).

The catalysed reaction is an S-(2-hydroxyacyl)glutathione + H2O = a 2-hydroxy carboxylate + glutathione + H(+). It participates in secondary metabolite metabolism; methylglyoxal degradation; (R)-lactate from methylglyoxal: step 2/2. Functionally, thiolesterase that catalyzes the hydrolysis of S-D-lactoyl-glutathione to form glutathione and D-lactic acid. In Xylella fastidiosa (strain 9a5c), this protein is Hydroxyacylglutathione hydrolase.